Consider the following 243-residue polypeptide: ADP-ribosylation factor-like protein 10 (243 aa).

GTP-binding positions include 83-90 (GLDGSGKS), 127-131 (EIGGS), and 184-187 (NKQD).

This sequence belongs to the small GTPase superfamily. Arf family.

The sequence is that of ADP-ribosylation factor-like protein 10 (Arl10) from Mus musculus (Mouse).